The sequence spans 113 residues: Pro-FMRFamide-related neuropeptide FF (113 aa).

The signal sequence occupies residues 1–20 (MDSRQAAALLVLLLLIDGGC). The propeptide occupies 21 to 65 (AEGPGGQQEDQLSAEEDSEPLPPQDAQTSGSLLHYLLQAMERPGR). A disordered region spans residues 22 to 48 (EGPGGQQEDQLSAEEDSEPLPPQDAQT). Phenylalanine amide is present on Phe76. Positions 79-92 (NTQGSWRNEWLSPR) are excised as a propeptide. Phenylalanine amide is present on Phe110.

It belongs to the FARP (FMRFamide related peptide) family.

It localises to the secreted. Functionally, morphine modulating peptides. Have wide-ranging physiologic effects, including the modulation of morphine-induced analgesia, elevation of arterial blood pressure, and increased somatostatin secretion from the pancreas. Neuropeptide FF potentiates and sensitizes ASIC1 and ASIC3 channels. The chain is Pro-FMRFamide-related neuropeptide FF from Homo sapiens (Human).